Reading from the N-terminus, the 769-residue chain is Bifunctional glycosyltransferase pgtA (769 aa).

The segment at 25-210 (YQGINNLIIS…SVIFKRSIFT (186 aa)) is N-acetylgalactosamine 3-beta-galactosyltransferase. A compositionally biased stretch (low complexity) spans 410–441 (NNINNNNNNNNNNNNNNNNNNNNNNNNNNNNN). Residues 410 to 442 (NNINNNNNNNNNNNNNNNNNNNNNNNNNNNNNS) are disordered. The interval 442–769 (SILNFISGIN…SVHIGELFIS (328 aa)) is alpha-1,2-fucosyltransferase.

The protein belongs to the glycosyltransferase 2 family.

It carries out the reaction an N-acetyl-beta-D-glucosaminyl derivative + UDP-alpha-D-galactose = a beta-D-galactosyl-(1-&gt;3)-N-acetyl-beta-D-glucosaminyl derivative + UDP + H(+). The enzyme catalyses a beta-D-galactosyl-(1-&gt;3)-N-acetyl-beta-D-glucosaminyl derivative + GDP-beta-L-fucose = an alpha-L-Fuc-(1-&gt;2)-beta-D-Gal-(1-&gt;3)-beta-D-GlcNAc derivative + GDP + H(+). In terms of biological role, bifunctional protein composed of 2 glycosyltransferase domains involved in glycosylating skp1. The N-terminal part catalyzes the transfer of a galactose residue to GlcNAc-skp1 in a beta 1-3 linkage. The C-terminal part catalyzes the transfer of a fucose residue to Gal-GlcNAc-skp1 in an alpha 1-2 linkage. This Dictyostelium discoideum (Social amoeba) protein is Bifunctional glycosyltransferase pgtA (pgtA).